Reading from the N-terminus, the 347-residue chain is Leucine-rich repeat-containing protein 69 (347 aa).

9 LRR repeats span residues 15-37 (NTKI…EKLP), 38-60 (NLKT…RTLT), 61-82 (QLTL…IKYL), 84-105 (SLKN…VFNG), 108-129 (RLIM…IGRL), 131-152 (SLTY…LCSL), 154-175 (HLSE…IKFL), 177-198 (NLQQ…ICHL), and 200-222 (KLRV…QNLR).

This sequence belongs to the LRRC69 family.

In Mus musculus (Mouse), this protein is Leucine-rich repeat-containing protein 69 (Lrrc69).